Here is a 1897-residue protein sequence, read N- to C-terminus: 1,3-beta-glucan synthase component FKS1 (1897 aa).

The segment at 1–106 (MSGYPAGHYE…SETFSDFTMR (106 aa)) is disordered. Basic and acidic residues predominate over residues 8–29 (HYEDGYGHQEHGGDAYYQDEHG). The span at 74–83 (GDQYYDQGNG) shows a compositional bias: low complexity. Transmembrane regions (helical) follow at residues 487–507 (IWVI…PTLY), 525–545 (WSAV…ATLC), 564–584 (LMFL…VFGF), 591–611 (TICL…FFFF), 655–675 (LWIC…TLSL), 707–727 (ILLG…SYLW), 728–748 (YVIC…VSIW), 1329–1349 (NMFI…LGAL), 1386–1406 (CVVS…VQEL), 1473–1493 (FAGP…FATS), 1497–1517 (TPAL…PFLF), 1588–1608 (IFFS…VPYL), 1630–1650 (IAIV…MFFG), 1666–1686 (FGAV…LVIF), 1701–1721 (VLGM…IISL), 1766–1786 (FSAD…ALCI), and 1826–1846 (FAIL…APLV).

This sequence belongs to the glycosyltransferase 48 family. Component of the 1,3-beta-glucan synthase (GS) complex composed of a catalytic subunit fksA and a regulatory subunit.

It is found in the mitochondrion. It localises to the cell membrane. It catalyses the reaction [(1-&gt;3)-beta-D-glucosyl](n) + UDP-alpha-D-glucose = [(1-&gt;3)-beta-D-glucosyl](n+1) + UDP + H(+). Functionally, catalytic subunit of the 1,3-beta-glucan synthase. Synthesizes 1,3-beta-glucan, a major structural component of the fungal cell wall. Involved in cell wall synthesis, maintenance and remodeling. The sequence is that of 1,3-beta-glucan synthase component FKS1 from Aspergillus niger (strain ATCC MYA-4892 / CBS 513.88 / FGSC A1513).